The following is a 211-amino-acid chain: Thymidylate kinase (211 aa).

Residue 11 to 18 (GPDGAGKT) participates in ATP binding.

It belongs to the thymidylate kinase family.

It catalyses the reaction dTMP + ATP = dTDP + ADP. Functionally, phosphorylation of dTMP to form dTDP in both de novo and salvage pathways of dTTP synthesis. This Streptococcus pyogenes serotype M3 (strain ATCC BAA-595 / MGAS315) protein is Thymidylate kinase.